A 503-amino-acid polypeptide reads, in one-letter code: Discoidin, CUB and LCCL domain-containing protein 1 (503 aa).

The signal sequence occupies residues 1-25; that stretch reads MGTGAGGPSVLALLFAVCAPLRLQA. Residues 26-250 are Extracellular-facing; sequence EELGDGCGHI…FTTPGMNITT (225 aa). Intrachain disulfides connect C32-C59, C85-C103, C149-C165, and C169-C191. The region spanning 32 to 141 is the CUB domain; that stretch reads CGHIVTSQDS…RGFLLTYASS (110 aa). Residue N55 is glycosylated (N-linked (GlcNAc...) asparagine). Positions 143–239 constitute an LCCL domain; the sequence is HPDLITCLER…RHGSLSEKRF (97 aa). N247 carries an N-linked (GlcNAc...) asparagine glycan. The chain crosses the membrane as a helical span at residues 251-271; that stretch reads VAIPSVIFIALLLTGMGIFAI. Over 272-503 the chain is Cytoplasmic; sequence CRKRKKKGNP…LNQTAMTALL (232 aa). S305 carries the post-translational modification Phosphoserine. Residue T406 is modified to Phosphothreonine. The tract at residues 410 to 503 is disordered; the sequence is QSGYRVPGPR…LNQTAMTALL (94 aa). Over residues 494 to 503 the composition is skewed to polar residues; sequence LNQTAMTALL.

The protein resides in the membrane. In Mus musculus (Mouse), this protein is Discoidin, CUB and LCCL domain-containing protein 1 (Dcbld1).